Reading from the N-terminus, the 241-residue chain is Methylthioribulose-1-phosphate dehydratase (241 aa).

Cys-102 serves as a coordination point for substrate. Zn(2+) contacts are provided by His-120, His-122, and His-199.

It belongs to the aldolase class II family. MtnB subfamily. The cofactor is Zn(2+).

It localises to the cytoplasm. The catalysed reaction is 5-(methylsulfanyl)-D-ribulose 1-phosphate = 5-methylsulfanyl-2,3-dioxopentyl phosphate + H2O. It participates in amino-acid biosynthesis; L-methionine biosynthesis via salvage pathway; L-methionine from S-methyl-5-thio-alpha-D-ribose 1-phosphate: step 2/6. Its function is as follows. Catalyzes the dehydration of methylthioribulose-1-phosphate (MTRu-1-P) into 2,3-diketo-5-methylthiopentyl-1-phosphate (DK-MTP-1-P). This Coprinopsis cinerea (strain Okayama-7 / 130 / ATCC MYA-4618 / FGSC 9003) (Inky cap fungus) protein is Methylthioribulose-1-phosphate dehydratase.